The chain runs to 846 residues: Aminopeptidase N (846 aa).

Substrate contacts are provided by residues Glu120 and 252 to 256; that span reads GAMEN. His288 is a binding site for Zn(2+). Glu289 serves as the catalytic Proton acceptor. The Zn(2+) site is built by His292 and Glu311.

Belongs to the peptidase M1 family. Monomer. Zn(2+) is required as a cofactor.

The protein localises to the cytoplasm. It catalyses the reaction Release of an N-terminal amino acid, Xaa-|-Yaa- from a peptide, amide or arylamide. Xaa is preferably Ala, but may be most amino acids including Pro (slow action). When a terminal hydrophobic residue is followed by a prolyl residue, the two may be released as an intact Xaa-Pro dipeptide.. Aminopeptidase with broad substrate specificity to several peptides. It has more affinity for oligopeptides than for dipeptides. It plays an essential role in the metabolism, it may be involved in nitrogen supply or protein turnover. The chain is Aminopeptidase N (pepN) from Lactococcus lactis subsp. lactis (strain IL1403) (Streptococcus lactis).